The following is a 438-amino-acid chain: Protein phosphatase 2C homolog 2 (438 aa).

Residues 23–294 (IYGVSAMQGW…DNMTMVIIGF (272 aa)) form the PPM-type phosphatase domain. Residues aspartate 67, glycine 68, aspartate 236, and aspartate 285 each contribute to the Mn(2+) site. A disordered region spans residues 370–438 (VLTGSDDTEM…EKTPEESKKD (69 aa)). A compositionally biased stretch (acidic residues) spans 375-387 (DDTEMFDNADEDK). Residues 398–438 (GKTDAKEETEAKPAPEAESSKPADGSEKKQDEKTPEESKKD) are compositionally biased toward basic and acidic residues.

This sequence belongs to the PP2C family. It depends on Mg(2+) as a cofactor. Mn(2+) is required as a cofactor.

The protein resides in the cytoplasm. It is found in the nucleus. The enzyme catalyses O-phospho-L-seryl-[protein] + H2O = L-seryl-[protein] + phosphate. It carries out the reaction O-phospho-L-threonyl-[protein] + H2O = L-threonyl-[protein] + phosphate. In terms of biological role, dephosphorylating regulator for many key proteins. Negatively regulates the endoplasmic reticulum unfolded protein response. This chain is Protein phosphatase 2C homolog 2, found in Hypocrea jecorina (strain QM6a) (Trichoderma reesei).